Here is a 208-residue protein sequence, read N- to C-terminus: Putative RING finger protein 413R (208 aa).

Residues 1–87 (MDAIFYPLPI…RHWSDDDSDR (87 aa)) are disordered. Residues 22 to 71 (DFQEEDFQEEDFQEEDFQEEDFQEEDEDEEDEEVNEYPSDLDDEYPDSDY) are compositionally biased toward acidic residues. Residues 72-82 (YDERSDRHWSD) are compositionally biased toward basic and acidic residues. The stretch at 83–147 (DDSDRDLDDL…KLTTLSKNLT (65 aa)) forms a coiled coil. An RING-type zinc finger spans residues 148 to 196 (CIICLTNQVQILTIPCGHLIMCNPCSLNLNNSVCTRGVNSNYEKCPKCR).

The polypeptide is Putative RING finger protein 413R (EF2) (Acheta domesticus (House cricket)).